An 89-amino-acid polypeptide reads, in one-letter code: Small ribosomal subunit protein uS15 (89 aa).

Basic and acidic residues predominate over residues 1–21 (MALSPEKKNEIIENFKTHEGD). The interval 1 to 23 (MALSPEKKNEIIENFKTHEGDTG) is disordered.

This sequence belongs to the universal ribosomal protein uS15 family. Part of the 30S ribosomal subunit. Forms a bridge to the 50S subunit in the 70S ribosome, contacting the 23S rRNA.

Its function is as follows. One of the primary rRNA binding proteins, it binds directly to 16S rRNA where it helps nucleate assembly of the platform of the 30S subunit by binding and bridging several RNA helices of the 16S rRNA. In terms of biological role, forms an intersubunit bridge (bridge B4) with the 23S rRNA of the 50S subunit in the ribosome. This is Small ribosomal subunit protein uS15 from Desulforamulus reducens (strain ATCC BAA-1160 / DSM 100696 / MI-1) (Desulfotomaculum reducens).